Consider the following 712-residue polypeptide: Potassium transporter 1 (712 aa).

Residues 1 to 19 (MNQSPSLIEQGISQQHLKT) lie on the Cytoplasmic side of the membrane. A helical transmembrane segment spans residues 20-40 (LSCANVLTLAYQSLGVIYGDL). Residues 41 to 67 (STSPLYVYKTTFSGKLSLHEDDEEIFG) are Extracellular-facing. Residues 68 to 88 (VFSFIFWTFTLIALFKYVFIV) traverse the membrane as a helical segment. The Cytoplasmic segment spans residues 89–154 (LSADDNGEGG…FFEKHPKSQK (66 aa)). The helical transmembrane segment at 155-175 (CLLLFVLLGTCMAIGDSVLTP) threads the bilayer. Over 176–189 (TISVLSAVSGVKLK) the chain is Extracellular. Residues 190 to 210 (IPNLHENYVVIIACIILVAIF) form a helical membrane-spanning segment. Over 211–219 (SVQRYGTHR) the chain is Cytoplasmic. Residues 220 to 240 (VAFIFAPISTAWLLSISSIGV) traverse the membrane as a helical segment. The Extracellular portion of the chain corresponds to 241-267 (YNTIKWNPRIVSALSPVYMYKFLRSTG). The helical transmembrane segment at 268-288 (VEGWVSLGGVVLSITGVETMF) threads the bilayer. Residues 289-300 (ADLGHFSSLSIK) are Cytoplasmic-facing. Residues 301–321 (VAFSFFVYPCLILAYMGEAAF) traverse the membrane as a helical segment. Residues 322 to 340 (LSKHHEDIQQSFYKAIPEP) are Extracellular-facing. Residues 341-361 (VFWPVFIVATFAAVVGSQAVI) traverse the membrane as a helical segment. Topologically, residues 362-392 (SATFSIISQCCALDCFPRVKIIHTSSKIHGQ) are cytoplasmic. Residues 393 to 413 (IYIPEVNWMLMCLCLAVTIGL) form a helical membrane-spanning segment. At 414–424 (RDTNMMGHAYG) the chain is on the extracellular side. The chain crosses the membrane as a helical span at residues 425-445 (LAVTSVMLVTTCLMTLVMTIV). The Cytoplasmic portion of the chain corresponds to 446–449 (WKQR). A helical transmembrane segment spans residues 450–470 (IITVLAFVVFFGSIELLYFSS). Residues 471–474 (CVYK) are Extracellular-facing. Residues 475 to 495 (VPEGGWIPILLSLTFMAVMYI) traverse the membrane as a helical segment. The Cytoplasmic segment spans residues 496-712 (WNYGTTKKHE…LLEVGMVYYV (217 aa)).

This sequence belongs to the HAK/KUP transporter (TC 2.A.72.3) family. In terms of tissue distribution, detected in the whole mature plant but preferentially expressed in roots and stems, and in potassium-starved plants.

Its subcellular location is the cell membrane. Functionally, high-affinity potassium transporter that could play a major role in the uptake of potassium from the rhizosphere. May act as a low-affinity potassium transporter under high potassium concentrations. Could also transport rubidium. This Arabidopsis thaliana (Mouse-ear cress) protein is Potassium transporter 1 (POT1).